Consider the following 159-residue polypeptide: Stress-induced protein 1 (159 aa).

The region spanning 33 to 141 is the sHSP domain; it reads NNFNNIVPQQ…TVRALPIHTS (109 aa).

The protein belongs to the small heat shock protein (HSP20) family.

This chain is Stress-induced protein 1, found in Caenorhabditis elegans.